Consider the following 47-residue polypeptide: Small ribosomal subunit protein uS14 (47 aa).

Zn(2+) contacts are provided by Cys12, Cys15, Cys30, and Cys33.

It belongs to the universal ribosomal protein uS14 family. Zinc-binding uS14 subfamily. As to quaternary structure, part of the 30S ribosomal subunit. Zn(2+) is required as a cofactor.

Binds 16S rRNA, required for the assembly of 30S particles. The chain is Small ribosomal subunit protein uS14 from Methanosphaera stadtmanae (strain ATCC 43021 / DSM 3091 / JCM 11832 / MCB-3).